The chain runs to 364 residues: Protein-glutamate methylesterase/protein-glutamine glutaminase 1 (364 aa).

Residues 6–123 enclose the Response regulatory domain; the sequence is KVLCVDDSAL…RDGMLDYSEK (118 aa). The residue at position 57 (aspartate 57) is a 4-aspartylphosphate. The 193-residue stretch at 165-357 folds into the CheB-type methylesterase domain; that stretch reads LVSTEKLIIV…RRIMARLASM (193 aa). Catalysis depends on residues serine 177, histidine 203, and aspartate 299.

Belongs to the CheB family. Post-translationally, phosphorylated by CheA. Phosphorylation of the N-terminal regulatory domain activates the methylesterase activity.

It localises to the cytoplasm. The catalysed reaction is [protein]-L-glutamate 5-O-methyl ester + H2O = L-glutamyl-[protein] + methanol + H(+). The enzyme catalyses L-glutaminyl-[protein] + H2O = L-glutamyl-[protein] + NH4(+). In terms of biological role, involved in chemotaxis. Part of a chemotaxis signal transduction system that modulates chemotaxis in response to various stimuli. Catalyzes the demethylation of specific methylglutamate residues introduced into the chemoreceptors (methyl-accepting chemotaxis proteins or MCP) by CheR. Also mediates the irreversible deamidation of specific glutamine residues to glutamic acid. The sequence is that of Protein-glutamate methylesterase/protein-glutamine glutaminase 1 from Burkholderia mallei (strain ATCC 23344).